The sequence spans 518 residues: MQYSIKQILSNANDKLNKIGINLPGLEARILLQHVTNKPIEHLLIKLNEQLSEAEIEAFEKLLERRLAHEPIAYIIGVKEFYSREFIVNKHVLIPRIDTEVLVDVVIGLVVSRNNLHMFSKLKSLDSVLTTQSYNILELGTGSGCIAISLLCELPNTNIIATDISVDAIKVAKSNSIKYNVTDRIQIIHSNWFEKLDKQKFDFIVSNPPYISHTEKLKMAIETINYEPSIALFAEEDGLEAYSIIAKNAKQFLKPNGKIILEIGFSQAAKVSKIFLNYGYNIDYIYRDLQSHNRVIEISPINLNRSYARRIGKSLSKMQQKLLDNELPKYLFSKEKFKSEKRKVFLEIGFGMGEHLINQAKINPDTLFIGVEVYLNGVANVLKHSAQHNITNFLLFPNNLDLILNDLPNNSLDGIYILFPDPWIKNKKKKKRIFNKERLKILQNKLKNNGNLVFASDIENYFYEAMALIRQNGNFEIIHNDDYLQPHDNYIITKYHQKAINANRTAKFMILQHALTDH.

The hemK stretch occupies residues 1-300 (MQYSIKQILS…SHNRVIEISP (300 aa)). The interval 1–302 (MQYSIKQILS…NRVIEISPIN (302 aa)) is RF MTase. S-adenosyl-L-methionine contacts are provided by residues 140-144 (GTGSG), Asp-163, Trp-192, Asn-207, Glu-347, Glu-372, Asn-399, and Asp-421. 207 to 210 (NPPY) contributes to the substrate binding site. The interval 301-518 (INLNRSYARR…MILQHALTDH (218 aa)) is tRNA (guanine-N(7)-)-methyltransferase. Positions 305-518 (RSYARRIGKS…MILQHALTDH (214 aa)) are tRNA MTase. The active site involves Asp-421. Substrate-binding residues include Lys-425 and Asp-457.

The protein in the C-terminal section; belongs to the class I-like SAM-binding methyltransferase superfamily. TrmB family. In the N-terminal section; belongs to the protein N5-glutamine methyltransferase family. PrmC subfamily.

It carries out the reaction L-glutaminyl-[peptide chain release factor] + S-adenosyl-L-methionine = N(5)-methyl-L-glutaminyl-[peptide chain release factor] + S-adenosyl-L-homocysteine + H(+). The enzyme catalyses guanosine(46) in tRNA + S-adenosyl-L-methionine = N(7)-methylguanosine(46) in tRNA + S-adenosyl-L-homocysteine. In terms of biological role, methylates the class 1 translation termination release factors RF1/PrfA and RF2/PrfB on the glutamine residue of the universally conserved GGQ motif. Its function is as follows. Catalyzes the formation of N(7)-methylguanine at position 46 (m7G46) in tRNA. In Rickettsia prowazekii (strain Madrid E), this protein is Bifunctional methyltransferase (prmC/trmB).